The sequence spans 294 residues: Potassium-transporting ATPase subunit beta (294 aa).

The Cytoplasmic segment spans residues 1 to 36 (MAALQEKKSCSQRMAEFRHYCWNPDTGQMLGRTPAR). A helical; Signal-anchor for type II membrane protein transmembrane segment spans residues 37 to 57 (WVWISLYYAGFYVVMTGLFAL). At 58–294 (CIYVLMQTID…KVEFKLTIQK (237 aa)) the chain is on the extracellular side. N-linked (GlcNAc...) asparagine glycosylation is found at N99, N103, N130, N146, and N161. A disulfide bridge links C131 with C152. Residues C162 and C178 are joined by a disulfide bond. 2 N-linked (GlcNAc...) asparagine glycosylation sites follow: N193 and N225. The segment at 194–294 (NTAPRVDCTF…KVEFKLTIQK (101 aa)) is immunoglobulin-like. A disulfide bridge connects residues C201 and C266.

This sequence belongs to the X(+)/potassium ATPases subunit beta family. As to quaternary structure, the ATPase pump is composed of two subunits: alpha (catalytic) and beta (regulatory). Interacts with alpha subunit ATP12A; this interaction is required for the formation of a functionally active pump and targeting at the plasma membrane. Interacts (via N-terminus) with alpha subunit ATP4A (via the P-domain). Post-translationally, N-glycosylation is necessary for assembly and functional expression of the pump at the plasma membrane. As to expression, expressed in parietal cells (at protein level).

The protein localises to the apical cell membrane. The protein resides in the cell membrane. Functionally, the beta subunit of the gastric H(+)/K(+) ATPase pump which transports H(+) ions in exchange for K(+) ions across the apical membrane of parietal cells. Plays a structural and regulatory role in the assembly and membrane targeting of a functionally active pump. Within a transport cycle, the transfer of a H(+) ion across the membrane is coupled to ATP hydrolysis and is associated with a transient phosphorylation of the alpha subunit that shifts the pump conformation from inward-facing (E1) to outward-facing state (E2). Interacts with the phosphorylation domain of the alpha subunit and functions as a ratchet, stabilizing the lumenal-open E2 conformation and preventing the reverse reaction of the transport cycle. This Mus musculus (Mouse) protein is Potassium-transporting ATPase subunit beta (Atp4b).